Reading from the N-terminus, the 329-residue chain is NADH-quinone oxidoreductase subunit H 2 (329 aa).

The next 8 membrane-spanning stretches (helical) occupy residues 12–32, 78–98, 120–140, 159–179, 191–211, 242–262, 270–290, and 309–329; these read GAKI…LVFA, WLFY…FAVI, VGLL…ALGG, LISY…LAGS, GVWF…SIAA, LFFV…TTFF, LLPP…FFIW, and KVLT…LMFV.

This sequence belongs to the complex I subunit 1 family. As to quaternary structure, NDH-1 is composed of 14 different subunits. Subunits NuoA, H, J, K, L, M, N constitute the membrane sector of the complex.

It is found in the cell inner membrane. It carries out the reaction a quinone + NADH + 5 H(+)(in) = a quinol + NAD(+) + 4 H(+)(out). Functionally, NDH-1 shuttles electrons from NADH, via FMN and iron-sulfur (Fe-S) centers, to quinones in the respiratory chain. The immediate electron acceptor for the enzyme in this species is believed to be ubiquinone. Couples the redox reaction to proton translocation (for every two electrons transferred, four hydrogen ions are translocated across the cytoplasmic membrane), and thus conserves the redox energy in a proton gradient. This subunit may bind ubiquinone. The polypeptide is NADH-quinone oxidoreductase subunit H 2 (Geobacter sulfurreducens (strain ATCC 51573 / DSM 12127 / PCA)).